Here is a 255-residue protein sequence, read N- to C-terminus: MKIDLNSDLGESFGRYKLGLDEEVMKYITSANIACGWHAGDPLIMRKTVKLAKDMNVEVGAHPGYPDLMGFGRRYMDLTKEEARNYILYQIGALYAFVKAEGLTLQHVKPHGALYNALVRDEELTIGVLEGIADFDKNIIFVGLSMSKPLEIAEEMGLKVAHEVFADRAYNPDGTLVSRRKPGAVIHNKEEIAERVISMVKDGGVKSINGEWVELRADTICVHGDNPKAVEITAYLRKRLEEEGIKIVSMRELIR.

It belongs to the LamB/PxpA family. In terms of assembly, forms a complex composed of PxpA, PxpB and PxpC.

It carries out the reaction 5-oxo-L-proline + ATP + 2 H2O = L-glutamate + ADP + phosphate + H(+). Catalyzes the cleavage of 5-oxoproline to form L-glutamate coupled to the hydrolysis of ATP to ADP and inorganic phosphate. In Thermococcus sibiricus (strain DSM 12597 / MM 739), this protein is 5-oxoprolinase subunit A.